The primary structure comprises 557 residues: Potassium-transporting ATPase potassium-binding subunit (557 aa).

A run of 12 helical transmembrane segments spans residues 5 to 25 (GFLL…PLGS), 63 to 83 (LSAI…MLLG), 132 to 152 (GLTV…FALI), 170 to 190 (LLRI…LFFI), 253 to 273 (FVQM…FGEV), 283 to 303 (LLWA…WAEV), 329 to 349 (VLVS…AVIA), 356 to 376 (ALGG…FGGV), 379 to 399 (GLYG…LMIG), 416 to 436 (LTAL…ALAM), 484 to 504 (LLAF…MAIA), and 526 to 546 (LFVG…FIPA).

This sequence belongs to the KdpA family. The system is composed of three essential subunits: KdpA, KdpB and KdpC.

The protein resides in the cell inner membrane. In terms of biological role, part of the high-affinity ATP-driven potassium transport (or Kdp) system, which catalyzes the hydrolysis of ATP coupled with the electrogenic transport of potassium into the cytoplasm. This subunit binds the periplasmic potassium ions and delivers the ions to the membrane domain of KdpB through an intramembrane tunnel. This is Potassium-transporting ATPase potassium-binding subunit from Escherichia fergusonii (strain ATCC 35469 / DSM 13698 / CCUG 18766 / IAM 14443 / JCM 21226 / LMG 7866 / NBRC 102419 / NCTC 12128 / CDC 0568-73).